A 200-amino-acid chain; its full sequence is Probable nicotinate-nucleotide adenylyltransferase (200 aa).

The protein belongs to the NadD family.

It carries out the reaction nicotinate beta-D-ribonucleotide + ATP + H(+) = deamido-NAD(+) + diphosphate. Its pathway is cofactor biosynthesis; NAD(+) biosynthesis; deamido-NAD(+) from nicotinate D-ribonucleotide: step 1/1. Its function is as follows. Catalyzes the reversible adenylation of nicotinate mononucleotide (NaMN) to nicotinic acid adenine dinucleotide (NaAD). The polypeptide is Probable nicotinate-nucleotide adenylyltransferase (Lachnoclostridium phytofermentans (strain ATCC 700394 / DSM 18823 / ISDg) (Clostridium phytofermentans)).